The primary structure comprises 247 residues: Eukaryotic translation initiation factor 3 subunit J (247 aa).

2 disordered regions span residues 1–64 (MADW…KTLK) and 77–101 (EEKR…EEQM). Residues 24–45 (EGEDEDDDIKESWDDDDEDEKK) show a composition bias toward acidic residues. Residues 43-108 (EKKEDEAKNT…EQMAEKLRRQ (66 aa)) adopt a coiled-coil conformation.

It belongs to the eIF-3 subunit J family. As to quaternary structure, component of the eukaryotic translation initiation factor 3 (eIF-3) complex.

The protein resides in the cytoplasm. In terms of biological role, component of the eukaryotic translation initiation factor 3 (eIF-3) complex, which is involved in protein synthesis of a specialized repertoire of mRNAs and, together with other initiation factors, stimulates binding of mRNA and methionyl-tRNAi to the 40S ribosome. The eIF-3 complex specifically targets and initiates translation of a subset of mRNAs involved in cell proliferation. The polypeptide is Eukaryotic translation initiation factor 3 subunit J (Nematostella vectensis (Starlet sea anemone)).